The chain runs to 369 residues: RAB6-interacting golgin (369 aa).

The disordered stretch occupies residues 1 to 128; the sequence is MAQGWAGFSE…HNNVEILPPK (128 aa). Positions 11-27 are enriched in basic and acidic residues; the sequence is EELRRLKQTKDPFEPQR. Polar residues-rich tracts occupy residues 46 to 61 and 82 to 93; these read EQSQ…TSLL and SPTLPSHFTLTS. Positions 106–120 are enriched in basic and acidic residues; that stretch reads QPKELGLENSHDGHN. A coiled-coil region spans residues 145-297; that stretch reads RWEVLQQEQR…EVERLLHEQE (153 aa). Positions 188–369 are necessary for interaction with RCHY1; the sequence is IQKELQALDD…GNDISAALAT (182 aa). The disordered stretch occupies residues 334-369; the sequence is VSPKVDDQCGNSSSIPFLSPNCPNQEGNDISAALAT. Over residues 342–361 the composition is skewed to polar residues; that stretch reads CGNSSSIPFLSPNCPNQEGN.

The protein belongs to the GORAB family. Interacts with SCYL1. Interacts with RCHY1 and RAB6A/RAB6.

Its subcellular location is the cytoplasm. It is found in the golgi apparatus. In Homo sapiens (Human), this protein is RAB6-interacting golgin (GORAB).